We begin with the raw amino-acid sequence, 303 residues long: Lipoyl synthase (303 aa).

Cysteine 34, cysteine 39, cysteine 45, cysteine 60, cysteine 64, cysteine 67, and serine 273 together coordinate [4Fe-4S] cluster. The 217-residue stretch at 46–262 (WSKKHATVMI…ERVARTKGFL (217 aa)) folds into the Radical SAM core domain.

This sequence belongs to the radical SAM superfamily. Lipoyl synthase family. Requires [4Fe-4S] cluster as cofactor.

It localises to the cytoplasm. It catalyses the reaction [[Fe-S] cluster scaffold protein carrying a second [4Fe-4S](2+) cluster] + N(6)-octanoyl-L-lysyl-[protein] + 2 oxidized [2Fe-2S]-[ferredoxin] + 2 S-adenosyl-L-methionine + 4 H(+) = [[Fe-S] cluster scaffold protein] + N(6)-[(R)-dihydrolipoyl]-L-lysyl-[protein] + 4 Fe(3+) + 2 hydrogen sulfide + 2 5'-deoxyadenosine + 2 L-methionine + 2 reduced [2Fe-2S]-[ferredoxin]. The protein operates within protein modification; protein lipoylation via endogenous pathway; protein N(6)-(lipoyl)lysine from octanoyl-[acyl-carrier-protein]: step 2/2. Catalyzes the radical-mediated insertion of two sulfur atoms into the C-6 and C-8 positions of the octanoyl moiety bound to the lipoyl domains of lipoate-dependent enzymes, thereby converting the octanoylated domains into lipoylated derivatives. The protein is Lipoyl synthase of Rickettsia bellii (strain OSU 85-389).